A 316-amino-acid polypeptide reads, in one-letter code: Beta-ketoacyl-[acyl-carrier-protein] synthase III (316 aa).

Catalysis depends on residues cysteine 112 and histidine 243. Residues glutamine 244–arginine 248 are ACP-binding. The active site involves asparagine 273.

Belongs to the thiolase-like superfamily. FabH family. As to quaternary structure, homodimer.

Its subcellular location is the cytoplasm. The catalysed reaction is malonyl-[ACP] + acetyl-CoA + H(+) = 3-oxobutanoyl-[ACP] + CO2 + CoA. The protein operates within lipid metabolism; fatty acid biosynthesis. In terms of biological role, catalyzes the condensation reaction of fatty acid synthesis by the addition to an acyl acceptor of two carbons from malonyl-ACP. Catalyzes the first condensation reaction which initiates fatty acid synthesis and may therefore play a role in governing the total rate of fatty acid production. Possesses both acetoacetyl-ACP synthase and acetyl transacylase activities. Its substrate specificity determines the biosynthesis of branched-chain and/or straight-chain of fatty acids. The sequence is that of Beta-ketoacyl-[acyl-carrier-protein] synthase III from Histophilus somni (strain 129Pt) (Haemophilus somnus).